The chain runs to 186 residues: Alkyl hydroperoxide reductase AhpD (186 aa).

Catalysis depends on Cys-132, which acts as the Proton donor. A disulfide bridge connects residues Cys-132 and Cys-135. Residue Cys-135 is the Cysteine sulfenic acid (-SOH) intermediate of the active site.

The protein belongs to the AhpD family.

It carries out the reaction N(6)-[(R)-dihydrolipoyl]-L-lysyl-[lipoyl-carrier protein] + a hydroperoxide = N(6)-[(R)-lipoyl]-L-lysyl-[lipoyl-carrier protein] + an alcohol + H2O. In terms of biological role, antioxidant protein with alkyl hydroperoxidase activity. Required for the reduction of the AhpC active site cysteine residues and for the regeneration of the AhpC enzyme activity. The chain is Alkyl hydroperoxide reductase AhpD from Anaeromyxobacter sp. (strain K).